The chain runs to 337 residues: Inositol 2-dehydrogenase (337 aa).

Belongs to the Gfo/Idh/MocA family. As to quaternary structure, homotetramer.

The enzyme catalyses myo-inositol + NAD(+) = scyllo-inosose + NADH + H(+). Its function is as follows. Involved in the oxidation of myo-inositol (MI) to 2-keto-myo-inositol (2KMI or 2-inosose). The chain is Inositol 2-dehydrogenase from Corynebacterium glutamicum (strain ATCC 13032 / DSM 20300 / JCM 1318 / BCRC 11384 / CCUG 27702 / LMG 3730 / NBRC 12168 / NCIMB 10025 / NRRL B-2784 / 534).